The chain runs to 1198 residues: DNA polymerase II large subunit (1198 aa).

Disordered stretches follow at residues 281-332 (YKTG…PQKK) and 534-553 (HWAE…AAES). The segment covering 286–319 (DTDEADADSDDGTDEDAADDSDIDDSSAGDEEAD) has biased composition (acidic residues).

Belongs to the archaeal DNA polymerase II family. In terms of assembly, heterodimer of a large subunit and a small subunit.

It carries out the reaction DNA(n) + a 2'-deoxyribonucleoside 5'-triphosphate = DNA(n+1) + diphosphate. The catalysed reaction is Exonucleolytic cleavage in the 3'- to 5'-direction to yield nucleoside 5'-phosphates.. In terms of biological role, possesses two activities: a DNA synthesis (polymerase) and an exonucleolytic activity that degrades single-stranded DNA in the 3'- to 5'-direction. Has a template-primer preference which is characteristic of a replicative DNA polymerase. The sequence is that of DNA polymerase II large subunit from Natronomonas pharaonis (strain ATCC 35678 / DSM 2160 / CIP 103997 / JCM 8858 / NBRC 14720 / NCIMB 2260 / Gabara) (Halobacterium pharaonis).